The following is a 209-amino-acid chain: ATP phosphoribosyltransferase (209 aa).

It belongs to the ATP phosphoribosyltransferase family. Short subfamily. As to quaternary structure, heteromultimer composed of HisG and HisZ subunits.

It is found in the cytoplasm. The enzyme catalyses 1-(5-phospho-beta-D-ribosyl)-ATP + diphosphate = 5-phospho-alpha-D-ribose 1-diphosphate + ATP. The protein operates within amino-acid biosynthesis; L-histidine biosynthesis; L-histidine from 5-phospho-alpha-D-ribose 1-diphosphate: step 1/9. Its function is as follows. Catalyzes the condensation of ATP and 5-phosphoribose 1-diphosphate to form N'-(5'-phosphoribosyl)-ATP (PR-ATP). Has a crucial role in the pathway because the rate of histidine biosynthesis seems to be controlled primarily by regulation of HisG enzymatic activity. In Alkaliphilus metalliredigens (strain QYMF), this protein is ATP phosphoribosyltransferase.